The primary structure comprises 166 residues: Regulator of ribonuclease activity A (166 aa).

Belongs to the RraA family. As to quaternary structure, homotrimer. Binds to both RNA-binding sites in the C-terminal region of Rne and to RhlB.

The protein resides in the cytoplasm. Its function is as follows. Globally modulates RNA abundance by binding to RNase E (Rne) and regulating its endonucleolytic activity. Can modulate Rne action in a substrate-dependent manner by altering the composition of the degradosome. Modulates RNA-binding and helicase activities of the degradosome. The polypeptide is Regulator of ribonuclease activity A (Actinobacillus succinogenes (strain ATCC 55618 / DSM 22257 / CCUG 43843 / 130Z)).